We begin with the raw amino-acid sequence, 70 residues long: Cold shock-like protein CspH (70 aa).

In terms of domain architecture, CSD spans 7–67 (GIVKTFDRKS…GLRGPTAANV (61 aa)).

The protein resides in the cytoplasm. This Escherichia coli O6:H1 (strain CFT073 / ATCC 700928 / UPEC) protein is Cold shock-like protein CspH (cspH).